The chain runs to 771 residues: MAEAHQAVAFQFTVTPEGVDFQLSREVLKHIYLSVIRSWKKRLIRIKNGILRGVYPGSPTSWLVVVMATAGSSYYNVDISMGLVYYIQRWLPEGRPYRTPYTRTLFSMAIFSTGVWMMGIFFFRQTLKLLLSYHGWMFELHGQTSHLTRVWAVCVRLLSGRRPMLYSFQTSLPKLPVPSVPATVHRYLESVEHLLDDEQYYRMETLAKEFEEKTAPRLQKYLVLKSWWATNYVSDWWEEYVYLRGRNPIVVNSNYYVMDLVLVKNTDVQAARLGNAVHAMITYRRKLDREEIKPVMALGLVPMCSYQMERMFNTTRIPGKDTDVLQHLPDSRHVAVYHKGRFFKVWLYEGSRLLKPRDLEMQFQRILDDPSPPQPGEERLAALTAGGRVEWAQARQAFFSSGKNKAALDAIERAAFFVALDEESHHYDPEDEASLSLYGKALLHGNCYNRWFDKSFTLISFKNGQLGLNTEHAWADAPIIGHLWEFVLGTDSFHLGYTETGHCLGKPNPVLPPPQRLQWDIPKQCQAVIESSYQVAKALADDVELYCFQFLPFGKGLIKKCRTSPDAFVQIALQLAHFRDRGKFCLTYEASMTRMFREGRTETVRSCTRESTAFVQAMVQGRHLNEDLQRLFRKAAEKHQNMYRLAMTGAGIDRHLFCLYVVSKYLGVESPFLAEVLSEPWRLSTSQIAQFQIRMFDPNKYPKHLGAGGGFGPVADDGYGVSYMIAGENTIFFHVSSKFSSSETNAQRFGNQIRQALLDIANLFQVPKADG.

Residues 1-47 lie on the Cytoplasmic side of the membrane; that stretch reads MAEAHQAVAFQFTVTPEGVDFQLSREVLKHIYLSVIRSWKKRLIRIK. Residues 48–73 form a helical membrane-spanning segment; it reads NGILRGVYPGSPTSWLVVVMATAGSS. Topologically, residues 74 to 101 are mitochondrial intermembrane; it reads YYNVDISMGLVYYIQRWLPEGRPYRTPY. Residues 102–121 traverse the membrane as a helical segment; the sequence is TRTLFSMAIFSTGVWMMGIF. The Cytoplasmic portion of the chain corresponds to 122 to 771; the sequence is FFRQTLKLLL…NLFQVPKADG (650 aa). The active-site Proton acceptor is the His-472. Position 554 to 566 (554 to 566) interacts with CoA; sequence GKGLIKKCRTSPD. (R)-carnitine is bound by residues Tyr-588 and Thr-601.

Belongs to the carnitine/choline acetyltransferase family.

It localises to the mitochondrion outer membrane. It catalyses the reaction (R)-carnitine + hexadecanoyl-CoA = O-hexadecanoyl-(R)-carnitine + CoA. It functions in the pathway lipid metabolism; fatty acid beta-oxidation. Catalyzes the transfer of the acyl group of long-chain fatty acid-CoA conjugates onto carnitine, an essential step for the mitochondrial uptake of long-chain fatty acids and their subsequent beta-oxidation in the mitochondrion. The polypeptide is Carnitine O-palmitoyltransferase 1, muscle isoform (CPT1B) (Bos taurus (Bovine)).